A 200-amino-acid polypeptide reads, in one-letter code: Integrin beta-1-binding protein 1 (200 aa).

Residues 1–10 (MFRKGKKRHS) show a composition bias toward basic residues. The disordered stretch occupies residues 1–55 (MFRKGKKRHSSSSSQSSEISTKSKSVDSSLGGLSRSSTVASLDTDSTKSSGQSNS). Positions 6–7 (KK) match the Nuclear localization signal motif. A compositionally biased stretch (low complexity) spans 11 to 29 (SSSSQSSEISTKSKSVDSS). Residues 34-55 (SRSSTVASLDTDSTKSSGQSNS) show a composition bias toward polar residues. At threonine 38 the chain carries Phosphothreonine; by CaMK2. Phosphoserine is present on serine 41. The PID domain occupies 58 to 200 (DTCAEFRIKY…FDSVLTSDKS (143 aa)). An interaction with KRIT1 region spans residues 136-139 (YLII). The interval 139–141 (IRM) is interaction with ITGB1.

Found in a complex, at least composed of ITGB1BP1, KRIT1 and RAP1A. Interacts (via C-terminal region) with ITGB1 (via C-terminal cytoplasmic tail); the interaction prevents talin TLN1 binding to ITGB1 and KRIT1 and ITGB1 compete for the same binding site. Interacts with KRIT1 (via N-terminal NPXY motif); the interaction induces the opening conformation of KRIT1 and KRIT1 and ITGB1 compete for the same binding site. Isoform 2 does not interact with ITGB1. Interacts with CDC42 (GTP- or GDP-bound form); the interaction is increased with the CDC42-membrane bound forms and prevents both CDC42 activation and cell spreading. Interacts (via C-terminal domain region) with NME2. Interacts with FERMT2 and RAC1. Interacts (via N-terminus and PTB domain) with ROCK1. In terms of processing, phosphorylation at Thr-38 seems to enhance integrin alpha5beta1-mediated cell adhesion. The degree of phosphorylation is regulated by integrin-dependent cell-matrix interaction. As to expression, expressed in the brain.

Its subcellular location is the nucleus. It localises to the cytoplasm. It is found in the cytoskeleton. The protein resides in the cell membrane. The protein localises to the cell projection. Its subcellular location is the lamellipodium. It localises to the ruffle. Its function is as follows. Key regulator of the integrin-mediated cell-matrix interaction signaling by binding to the ITGB1 cytoplasmic tail and preventing the activation of integrin alpha-5/beta-1 (heterodimer of ITGA5 and ITGB1) by talin or FERMT1. Plays a role in cell proliferation, differentiation, spreading, adhesion and migration in the context of mineralization and bone development and angiogenesis. Stimulates cellular proliferation in a fibronectin-dependent manner. Involved in the regulation of beta-1 integrin-containing focal adhesion (FA) site dynamics by controlling its assembly rate during cell adhesion; inhibits beta-1 integrin clustering within FA by directly competing with talin TLN1, and hence stimulates osteoblast spreading and migration in a fibronectin- and/or collagen-dependent manner. Acts as a guanine nucleotide dissociation inhibitor (GDI) by regulating Rho family GTPases during integrin-mediated cell matrix adhesion; reduces the level of active GTP-bound form of both CDC42 and RAC1 GTPases upon cell adhesion to fibronectin. Stimulates the release of active CDC42 from the membranes to maintain it in an inactive cytoplasmic pool. Participates in the translocation of the Rho-associated protein kinase ROCK1 to membrane ruffles at cell leading edges of the cell membrane, leading to an increase of myoblast cell migration on laminin. Plays a role in bone mineralization at a late stage of osteoblast differentiation; modulates the dynamic formation of focal adhesions into fibrillar adhesions, which are adhesive structures responsible for fibronectin deposition and fibrillogenesis. Plays a role in blood vessel development; acts as a negative regulator of angiogenesis by attenuating endothelial cell proliferation and migration, lumen formation and sprouting angiogenesis by promoting AKT phosphorylation and inhibiting ERK1/2 phosphorylation through activation of the Notch signaling pathway. Promotes transcriptional activity of the MYC promoter. The chain is Integrin beta-1-binding protein 1 (Itgb1bp1) from Mus musculus (Mouse).